A 482-amino-acid chain; its full sequence is Aspartyl/glutamyl-tRNA(Asn/Gln) amidotransferase subunit B (482 aa).

Belongs to the GatB/GatE family. GatB subfamily. In terms of assembly, heterotrimer of A, B and C subunits.

It catalyses the reaction L-glutamyl-tRNA(Gln) + L-glutamine + ATP + H2O = L-glutaminyl-tRNA(Gln) + L-glutamate + ADP + phosphate + H(+). The catalysed reaction is L-aspartyl-tRNA(Asn) + L-glutamine + ATP + H2O = L-asparaginyl-tRNA(Asn) + L-glutamate + ADP + phosphate + 2 H(+). In terms of biological role, allows the formation of correctly charged Asn-tRNA(Asn) or Gln-tRNA(Gln) through the transamidation of misacylated Asp-tRNA(Asn) or Glu-tRNA(Gln) in organisms which lack either or both of asparaginyl-tRNA or glutaminyl-tRNA synthetases. The reaction takes place in the presence of glutamine and ATP through an activated phospho-Asp-tRNA(Asn) or phospho-Glu-tRNA(Gln). This chain is Aspartyl/glutamyl-tRNA(Asn/Gln) amidotransferase subunit B, found in Methanoregula boonei (strain DSM 21154 / JCM 14090 / 6A8).